Reading from the N-terminus, the 130-residue chain is Small ribosomal subunit protein uS9 (130 aa).

This sequence belongs to the universal ribosomal protein uS9 family.

This Burkholderia cenocepacia (strain HI2424) protein is Small ribosomal subunit protein uS9.